The chain runs to 1621 residues: ALK tyrosine kinase receptor (1621 aa).

The first 18 residues, 1-18 (MGAAGFLWLLPPLLLAAA), serve as a signal peptide directing secretion. Residues 19-1042 (SYSGAATDQR…PHLPLSLILS (1024 aa)) lie on the Extracellular side of the membrane. Positions 48-70 (RLQRKSLAVDFVVPSLFRVYARD) are heparin-binding region. N-linked (GlcNAc...) asparagine glycosylation is found at asparagine 174, asparagine 248, asparagine 289, asparagine 328, asparagine 415, asparagine 428, asparagine 449, asparagine 567, asparagine 575, asparagine 631, and asparagine 673. An MAM 1 domain is found at 268 to 431 (LECSFDFPCE…DFFALKNCSE (164 aa)). An LDL-receptor class A domain is found at 441–477 (LQSSFTCWNGTVLQLGQACDFHQDCAQGEDEGQLCSK). An MAM 2 domain is found at 482–640 (FYCNFENGFC…NISISLDCYL (159 aa)). A disulfide bridge connects residues cysteine 692 and cysteine 705. Asparagine 713 is a glycosylation site (N-linked (GlcNAc...) asparagine). The cysteines at positions 787 and 798 are disulfide-linked. N-linked (GlcNAc...) asparagine glycosylation is found at asparagine 812, asparagine 868, and asparagine 890. A disulfide bond links cysteine 910 and cysteine 932. An N-linked (GlcNAc...) asparagine glycan is attached at asparagine 990. 3 cysteine pairs are disulfide-bonded: cysteine 991-cysteine 999, cysteine 994-cysteine 1010, and cysteine 1012-cysteine 1025. Residues 991 to 1029 (CSHCEVDECHMDPESHKVICFCDHGTVLADDGVSCIVSP) form an EGF-like region. A helical transmembrane segment spans residues 1043–1063 (VVTSALVAALVLAFSGIMIVY). Residues 1064-1621 (RRKHQELQAM…SKNKVTQPGP (558 aa)) lie on the Cytoplasmic side of the membrane. Phosphotyrosine is present on residues tyrosine 1082, tyrosine 1096, and tyrosine 1100. The Protein kinase domain occupies 1120-1396 (ITLIRGLGHG…IEYCTQDPDV (277 aa)). ATP contacts are provided by residues 1126-1134 (LGHGAFGEV) and histidine 1128. Tyrosine 1135 carries the post-translational modification Phosphotyrosine. Residues lysine 1154 and 1201–1203 (ELM) contribute to the ATP site. Aspartate 1253 (proton acceptor) is an active-site residue. Aspartate 1274 contributes to the ATP binding site. Tyrosine 1282 bears the Phosphotyrosine mark. Residues 1412 to 1556 (EEKVPMRPKD…WTGPGAGPRR (145 aa)) are disordered. Over residues 1414-1423 (KVPMRPKDPE) the composition is skewed to basic and acidic residues. Low complexity predominate over residues 1441-1461 (SAAPQPAALTAPGPSVKKPPG). Over residues 1462-1472 (AGAGAGAGAGA) the composition is skewed to gly residues. Residues 1506-1518 (NKPTSLWNPTYGS) show a composition bias toward polar residues. Position 1516 is a phosphotyrosine (tyrosine 1516). Residues 1543–1552 (AEGGWTGPGA) show a composition bias toward gly residues.

Belongs to the protein kinase superfamily. Tyr protein kinase family. Insulin receptor subfamily. As to quaternary structure, homodimer; homodimerizes following heparin- and ligand-binding. Interacts with CBL, IRS1, PIK3R1 and PLCG1. Interacts with FRS2 and SHC1. Interacts with PTN and MDK. In terms of processing, phosphorylated at tyrosine residues by autocatalysis, which activates kinase activity. In cells not stimulated by a ligand, receptor protein tyrosine phosphatase beta and zeta complex (PTPRB/PTPRZ1) dephosphorylates ALK at the sites in ALK that are undergoing autophosphorylation through autoactivation. Mainly expressed in central nervous system (CNS) and other parts of the brain such as the paraventricular nucleus (PVN) of the hypothalamus. Expression is also found in peripheral nervous systems, eye, nasal epithelium, olfactory nerve, tongue, skin, tissue surrounding the esophagus, stomach, midgut, as well as testis and ovary.

The protein localises to the cell membrane. It carries out the reaction L-tyrosyl-[protein] + ATP = O-phospho-L-tyrosyl-[protein] + ADP + H(+). Its activity is regulated as follows. Activated upon ALKAL2 ligand-binding. ALKAL2-driven activation is coupled with heparin-binding. Following ligand-binding, homodimerizes and autophosphorylates, activating its kinase activity. Inactivated through dephosphorylation by receptor protein tyrosine phosphatase beta and zeta complex (PTPRB/PTPRZ1) when there is no stimulation by a ligand. Functionally, neuronal receptor tyrosine kinase that is essentially and transiently expressed in specific regions of the central and peripheral nervous systems and plays an important role in the genesis and differentiation of the nervous system. Also acts as a key thinness protein involved in the resistance to weight gain: in hypothalamic neurons, controls energy expenditure acting as a negative regulator of white adipose tissue lipolysis and sympathetic tone to fine-tune energy homeostasis. Following activation by ALKAL2 ligand at the cell surface, transduces an extracellular signal into an intracellular response. In contrast, ALKAL1 is not a potent physiological ligand for ALK. Ligand-binding to the extracellular domain induces tyrosine kinase activation, leading to activation of the mitogen-activated protein kinase (MAPK) pathway. Phosphorylates almost exclusively at the first tyrosine of the Y-x-x-x-Y-Y motif. Induces tyrosine phosphorylation of CBL, FRS2, IRS1 and SHC1, as well as of the MAP kinases MAPK1/ERK2 and MAPK3/ERK1. ALK activation may also be regulated by pleiotrophin (PTN) and midkine (MDK). PTN-binding induces MAPK pathway activation, which is important for the anti-apoptotic signaling of PTN and regulation of cell proliferation. MDK-binding induces phosphorylation of the ALK target insulin receptor substrate (IRS1), activates mitogen-activated protein kinases (MAPKs) and PI3-kinase, resulting also in cell proliferation induction. Drives NF-kappa-B activation, probably through IRS1 and the activation of the AKT serine/threonine kinase. Recruitment of IRS1 to activated ALK and the activation of NF-kappa-B are essential for the autocrine growth and survival signaling of MDK. This Mus musculus (Mouse) protein is ALK tyrosine kinase receptor.